The following is a 427-amino-acid chain: Proteinase-activated receptor 1 (427 aa).

The signal sequence occupies residues 1–21 (MGPRWLLLWAAGLGLCSPLVS). The propeptide at 22 to 41 (ARTRGPRPGTDPTNGTLGPR) is removed for receptor activation. Residues 23–87 (RTRGPRPGTD…RSSPPQKSPP (65 aa)) are disordered. The N-linked (GlcNAc...) asparagine glycan is linked to asparagine 35. Residues 42 to 104 (SFFLRNSNDG…SGYLTSAWLT (63 aa)) lie on the Extracellular side of the membrane. Positions 58-68 (PEDEDSSEGEF) are enriched in acidic residues. N-linked (GlcNAc...) asparagine glycosylation is present at asparagine 77. The chain crosses the membrane as a helical span at residues 105–130 (VFIPSVYTGVFLVSLPLNIMAVVVFV). Residues 131 to 139 (LKMKVKKPA) are Cytoplasmic-facing. Residues 140-159 (VVYMLHLAAADVLFVCVLPF) form a helical membrane-spanning segment. Over 160-178 (KISYYFSGSDWRFGSAMCR) the chain is Extracellular. Cysteine 177 and cysteine 256 are disulfide-bonded. A helical membrane pass occupies residues 179 to 200 (FVTAAFYGNMYASIMLMTAISV). The Cytoplasmic portion of the chain corresponds to 201 to 220 (DRFLAVVYPIQSLSWRTLGR). A helical transmembrane segment spans residues 221–241 (ASFICLAIWAMAIAGVAPLLL). Residues 242–270 (QEQATQVPGLNITACHDVLNQTLLEGYYS) lie on the Extracellular side of the membrane. N-linked (GlcNAc...) asparagine glycans are attached at residues asparagine 252 and asparagine 261. A helical membrane pass occupies residues 271 to 290 (YYFSAFSAVFFFVPLTLSTV). Over 291 to 313 (SYVSIIRCLSSSTVANQNKKSRA) the chain is Cytoplasmic. The chain crosses the membrane as a helical span at residues 314–336 (LLLSAAVFCIFILCFGPTNILLL). Topologically, residues 337–351 (LHYAFLSSDPMTEAA) are extracellular. Residues 352–376 (YFAYLLCVCVSSISCCIDPLIYYYA) traverse the membrane as a helical segment. Topologically, residues 377–427 (SSECQRHLFAILHCKESSDPGSCNSSGQLMPSKMDTCSSNLSSSLYKKLLT) are cytoplasmic. Serine 420 carries the post-translational modification Phosphoserine.

It belongs to the G-protein coupled receptor 1 family. Proteolytic cleavage by thrombin generates a new N-terminus that functions as a tethered ligand. Also proteolytically cleaved by cathepsin CTSG. Post-translationally, phosphorylated in the C-terminal tail; probably mediating desensitization prior to the uncoupling and internalization of the receptor.

It is found in the cell membrane. Its function is as follows. High affinity receptor that binds the activated thrombin, leading to calcium release from intracellular stores. The thrombin-activated receptor signaling pathway is mediated through PTX-insensitive G proteins, activation of phospholipase C resulting in the production of 1D-myo-inositol 1,4,5-trisphosphate (InsP3) which binds to InsP3 receptors causing calcium release from the stores. In astrocytes, the calcium released into the cytosol allows the Ca(2+)-dependent release of L-glutamate into the synaptic cleft through BEST1, that targets the neuronal postsynaptic GRIN2A/NMDAR receptor resulting in the synaptic plasticity regulation. May play a role in platelets activation and in vascular development. Mediates up-regulation of pro-inflammatory cytokines, such as MCP-1/CCL2 and IL6, triggered by coagulation factor Xa (F10) in cardiac fibroblasts and umbilical vein endothelial cells. This chain is Proteinase-activated receptor 1, found in Bos taurus (Bovine).